The primary structure comprises 459 residues: Transcription factor 7-like 2 (459 aa).

A compositionally biased stretch (gly residues) spans 1–11 (MPQLNGGGGDD). A CTNNB1-binding region spans residues 1–53 (MPQLNGGGGDDLGANDELISFKDEGEQEEKNSENSSAERDLADVKSSLVNESE). Residues 1–96 (MPQLNGGGGD…AKRQDGGLFK (96 aa)) are disordered. Basic and acidic residues predominate over residues 19 to 43 (ISFKDEGEQEEKNSENSSAERDLAD). K22 participates in a covalent cross-link: Glycyl lysine isopeptide (Lys-Gly) (interchain with G-Cter in SUMO2). Positions 47–56 (SLVNESETNQ) are enriched in polar residues. Residues 63-91 (EAERRPPPRSESFRDKSRESLEEAAKRQD) show a composition bias toward basic and acidic residues. A phosphothreonine; by NLK mark is found at T178 and T189. Residues 178–372 (TPLITYSNEH…RRWHALSREE (195 aa)) form a mediates interaction with MAD2L2 region. Residues 295-305 (TVKQESSQSDV) are compositionally biased toward polar residues. Disordered stretches follow at residues 295–327 (TVKQ…KPHI) and 397–418 (RDNY…TNEH). A Glycyl lysine isopeptide (Lys-Gly) (interchain with G-Cter in SUMO) cross-link involves residue K297. Basic and acidic residues predominate over residues 312–323 (KHQDSKKEEEKK). Positions 327–395 (IKKPLNAFML…LHMQLYPGWS (69 aa)) form a DNA-binding region, HMG box. The Nuclear localization signal motif lies at 402 to 408 (KKKKRKR).

The protein belongs to the TCF/LEF family. In terms of assembly, interacts with TGFB1I1. Interacts with SPIN1. Interacts with CTNNB1 (via the armadillo repeat); forms stable transcription complex. Interacts with EP300. Interacts with NLK. Interacts with CCDC85B (probably through the HMG box); prevents interaction with CTNNB1. Interacts with TNIK. Interacts with MAD2L2; prevents TCF7L2/TCF4 binding to promZIPK/DAPK3oters, negatively modulating its transcriptional activity. Interacts with ZIPK/DAPK3. Interacts with XIAP/BIRC4 and TLE3. Interacts with DDIT3/CHOP. The CTNNB1 and TCF7L2/TCF4 complex interacts with PML (isoform PML-4). Identified in a complex with CTNNB1 and FERMT2. Interacts with C11orf84/SPINDOC in a SPIN1-dependent manner. Interacts with DAZAP2; the interaction results in localization of DAZAP2 to the nucleus. In terms of processing, phosphorylated at Thr-178 and/or Thr-189 by NLK. Phosphorylation by NLK at these sites inhibits DNA-binding by TCF7L2/TCF4, thereby preventing transcriptional activation of target genes of the canonical Wnt/beta-catenin signaling pathway. Post-translationally, polysumoylated. Sumoylation is enhanced by PIAS family members and desumoylation is enhanced by SENP2. Sumoylation/desumoylation regulates TCF7L2/TCF4 transcription activity in the Wnt/beta-catenin signaling pathway without altering interaction with CTNNB1 nor binding to DNA. Detected in adult brain and liver, and at lower levels in intestine, with a clear increase from the distal colon to the duodenum. Detected at low levels in heart, lung, kidney, pituitary and testis.

The protein localises to the nucleus. It localises to the PML body. In terms of biological role, participates in the Wnt signaling pathway and modulates MYC expression by binding to its promoter in a sequence-specific manner. Acts as a repressor in the absence of CTNNB1, and as activator in its presence. Activates transcription from promoters with several copies of the Tcf motif CCTTTGATC in the presence of CTNNB1. TLE1, TLE2, TLE3 and TLE4 repress transactivation mediated by TCF7L2/TCF4 and CTNNB1. Expression of dominant-negative mutants results in cell-cycle arrest in G1. Necessary for the maintenance of the epithelial stem-cell compartment of the small intestine. This is Transcription factor 7-like 2 (Tcf7l2) from Mus musculus (Mouse).